The following is a 781-amino-acid chain: Cation channel sperm-associated auxiliary subunit delta (781 aa).

Positions 1-20 (MLVLMLVVATTFRLCPLVKA) are cleaved as a signal peptide. The Extracellular segment spans residues 21-725 (RPLCRIRTLR…YGAFPLSIFP (705 aa)). Disulfide bonds link Cys24–Cys370, Cys60–Cys146, Cys145–Cys153, Cys388–Cys497, Cys511–Cys705, Cys526–Cys573, and Cys625–Cys655. N-linked (GlcNAc...) asparagine glycans are attached at residues Asn231, Asn294, Asn458, Asn473, Asn539, and Asn631. A helical transmembrane segment spans residues 726-749 (PEITIVLLTAATLLSIWLAYMIPQ). The Cytoplasmic portion of the chain corresponds to 750–781 (LLHTEQGLEGNGFWVRLYQRCRKSCACLWGRC).

The protein belongs to the CATSPERD family. As to quaternary structure, component of the CatSper complex or CatSpermasome composed of the core pore-forming members CATSPER1, CATSPER2, CATSPER3 and CATSPER4 as well as auxiliary members CATSPERB, CATSPERG, CATSPERD, CATSPERE, CATSPERZ, C2CD6/CATSPERT, TMEM249, TMEM262 and EFCAB9. HSPA1 may be an additional auxiliary complex member. The core complex members CATSPER1, CATSPER2, CATSPER3 and CATSPER4 form a heterotetrameric channel. The auxiliary CATSPERB, CATSPERG, CATSPERD and CATSPERE subunits form a pavilion-like structure over the pore which stabilizes the complex through interactions with CATSPER4, CATSPER3, CATSPER1 and CATSPER2 respectively. TMEM262/CATSPERH interacts with CATSPERB, further stabilizing the complex. C2CD6/CATSPERT interacts at least with CATSPERD and is required for targeting the CatSper complex in the flagellar membrane.

It is found in the cell projection. The protein localises to the cilium. Its subcellular location is the flagellum membrane. Functionally, auxiliary component of the CatSper complex, a complex involved in sperm cell hyperactivation. Sperm cell hyperactivation is needed for sperm motility which is essential late in the preparation of sperm for fertilization. Required for CATSPER1 stability before intraflagellar transport and/or incorporation of the CatSper complex channel into the flagellar membrane. This Bos taurus (Bovine) protein is Cation channel sperm-associated auxiliary subunit delta.